The chain runs to 262 residues: Indole-3-glycerol phosphate synthase (262 aa).

This sequence belongs to the TrpC family.

It catalyses the reaction 1-(2-carboxyphenylamino)-1-deoxy-D-ribulose 5-phosphate + H(+) = (1S,2R)-1-C-(indol-3-yl)glycerol 3-phosphate + CO2 + H2O. It participates in amino-acid biosynthesis; L-tryptophan biosynthesis; L-tryptophan from chorismate: step 4/5. In Staphylococcus epidermidis (strain ATCC 12228 / FDA PCI 1200), this protein is Indole-3-glycerol phosphate synthase.